A 139-amino-acid polypeptide reads, in one-letter code: Putative pre-16S rRNA nuclease (139 aa).

It belongs to the YqgF nuclease family.

The protein resides in the cytoplasm. Its function is as follows. Could be a nuclease involved in processing of the 5'-end of pre-16S rRNA. In Streptococcus pneumoniae (strain JJA), this protein is Putative pre-16S rRNA nuclease.